Reading from the N-terminus, the 111-residue chain is Protein BEX5 (111 aa).

Residues 1 to 12 (MENVPKENKVVE) are compositionally biased toward basic and acidic residues. Positions 1 to 37 (MENVPKENKVVEKAPVQNEAPALGGGEYQEPGGNVKG) are disordered. The segment at 100-104 (HHDHH) is his cluster. Cys-108 provides a ligand contact to Zn(2+).

Belongs to the BEX family. Ubiquitinated. Degraded by the proteasome.

It localises to the cytoplasm. The polypeptide is Protein BEX5 (BEX5) (Homo sapiens (Human)).